The sequence spans 232 residues: YlmG homolog protein 1-1, chloroplastic (232 aa).

A chloroplast-targeting transit peptide spans 1–16; the sequence is MAAITALTLRSPVYLP. The next 2 helical transmembrane spans lie at 147–167 and 201–221; these read LTVV…VLMV and IIPP…AVLG.

It belongs to the YggT family.

It localises to the plastid. It is found in the chloroplast thylakoid membrane. In terms of biological role, required for the proper distribution of nucleoids in chloroplasts. The nucleoid partitioning by YLMG1-1 may be related to chloroplast division processes. This is YlmG homolog protein 1-1, chloroplastic from Arabidopsis thaliana (Mouse-ear cress).